Reading from the N-terminus, the 219-residue chain is Probable GTP-binding protein EngB (219 aa).

The 184-residue stretch at Val-24–Pro-207 folds into the EngB-type G domain. Residues Gly-32–Ser-39, Gly-59–His-63, Asp-81–Gly-84, Thr-148–Asp-151, and Phe-186–Ala-188 each bind GTP. Mg(2+) is bound by residues Ser-39 and Thr-61.

Belongs to the TRAFAC class TrmE-Era-EngA-EngB-Septin-like GTPase superfamily. EngB GTPase family. The cofactor is Mg(2+).

Its function is as follows. Necessary for normal cell division and for the maintenance of normal septation. The protein is Probable GTP-binding protein EngB of Burkholderia vietnamiensis (strain G4 / LMG 22486) (Burkholderia cepacia (strain R1808)).